The primary structure comprises 109 residues: Parvalbumin beta-1 (109 aa).

Position 2 is an N-acetylserine (serine 2). EF-hand domains follow at residues 39 to 74 (KSHE…FGAG) and 78 to 109 (LTAA…LVKA). Ca(2+) contacts are provided by aspartate 52, aspartate 54, serine 56, phenylalanine 58, glutamate 60, glutamate 63, aspartate 91, aspartate 93, aspartate 95, methionine 97, and glutamate 102.

This sequence belongs to the parvalbumin family.

Its function is as follows. In muscle, parvalbumin is thought to be involved in relaxation after contraction. It binds two calcium ions. The polypeptide is Parvalbumin beta-1 (Gadus chalcogrammus (Alaska pollock)).